The following is a 245-amino-acid chain: Uridylate kinase (245 aa).

20–23 is an ATP binding site; the sequence is KLSG. Glycine 60 lines the UMP pocket. 2 residues coordinate ATP: glycine 61 and arginine 65. Residues aspartate 80 and 141 to 148 each bind UMP; that span reads AGLPYFST. Tyrosine 175 and aspartate 178 together coordinate ATP.

The protein belongs to the UMP kinase family. In terms of assembly, homohexamer.

It localises to the cytoplasm. It catalyses the reaction UMP + ATP = UDP + ADP. It functions in the pathway pyrimidine metabolism; CTP biosynthesis via de novo pathway; UDP from UMP (UMPK route): step 1/1. Its activity is regulated as follows. Inhibited by UTP. Its function is as follows. Catalyzes the reversible phosphorylation of UMP to UDP. This chain is Uridylate kinase, found in Paenarthrobacter aurescens (strain TC1).